A 347-amino-acid chain; its full sequence is 4-hydroxy-2-oxovalerate aldolase 2 (347 aa).

A Pyruvate carboxyltransferase domain is found at 9-259; the sequence is ITIVDTTLRD…DTGVDLFPLI (251 aa). Substrate contacts are provided by residues 17-18, S171, and H198; that span reads RD. D18 provides a ligand contact to Mn(2+). Mn(2+) is bound by residues H198 and H200. A substrate-binding site is contributed by Y289.

Belongs to the 4-hydroxy-2-oxovalerate aldolase family.

It carries out the reaction (S)-4-hydroxy-2-oxopentanoate = acetaldehyde + pyruvate. This Rhodococcus opacus (strain B4) protein is 4-hydroxy-2-oxovalerate aldolase 2.